Reading from the N-terminus, the 409-residue chain is tRNA-specific 2-thiouridylase MnmA (409 aa).

ATP-binding positions include 20–27 (AMSGGVDS) and Leu-46. The active-site Nucleophile is the Cys-114. Cys-114 and Cys-210 form a disulfide bridge. Residue Gly-138 participates in ATP binding. Residues 160–162 (RDQ) are interaction with tRNA. The active-site Cysteine persulfide intermediate is Cys-210.

This sequence belongs to the MnmA/TRMU family.

Its subcellular location is the cytoplasm. The enzyme catalyses S-sulfanyl-L-cysteinyl-[protein] + uridine(34) in tRNA + AH2 + ATP = 2-thiouridine(34) in tRNA + L-cysteinyl-[protein] + A + AMP + diphosphate + H(+). Functionally, catalyzes the 2-thiolation of uridine at the wobble position (U34) of tRNA, leading to the formation of s(2)U34. In Bartonella henselae (strain ATCC 49882 / DSM 28221 / CCUG 30454 / Houston 1) (Rochalimaea henselae), this protein is tRNA-specific 2-thiouridylase MnmA.